We begin with the raw amino-acid sequence, 132 residues long: UPF0719 inner membrane protein YjfL (132 aa).

At 1–6 (MHILDS) the chain is on the periplasmic side. The helical transmembrane segment at 7-27 (LLAFSAYFFIGVAMVIIFLFI) threads the bilayer. Over 28 to 46 (YSKITPHNEWQLIKNNNTA) the chain is Cytoplasmic. The chain crosses the membrane as a helical span at residues 47 to 67 (ASLAFSGTLLGYVIPLSSAAI). Over 68 to 71 (NAVS) the chain is Periplasmic. The chain crosses the membrane as a helical span at residues 72 to 92 (IPDYFAWGGIALVIQLLVFAG). At 93–109 (VRLYMPALSEKIINHNT) the chain is on the cytoplasmic side. The helical transmembrane segment at 110-130 (AAGMFMGTAALAGGIFNAACM) threads the bilayer. At 131–132 (TW) the chain is on the periplasmic side.

The protein belongs to the UPF0719 family.

It is found in the cell inner membrane. The chain is UPF0719 inner membrane protein YjfL (yjfL) from Escherichia coli O157:H7.